The chain runs to 146 residues: MNHKVLLINGPNLNLLGRREPSVYGHQTLADIVAQLNEQAQAAGVQLEHIQSNAEFELINAIHATDAQMIIINPAAFTHTSVALRDALLGVDIPFYEVHLSNVHAREPFRHHSYLSDKAIGVICGFGAQGYEFALTAAIKRLKSAT.

Tyrosine 24 (proton acceptor) is an active-site residue. 3 residues coordinate substrate: asparagine 73, histidine 79, and aspartate 86. Histidine 99 serves as the catalytic Proton donor. Substrate-binding positions include 100 to 101 (LS) and arginine 110.

It belongs to the type-II 3-dehydroquinase family. In terms of assembly, homododecamer.

It carries out the reaction 3-dehydroquinate = 3-dehydroshikimate + H2O. It functions in the pathway metabolic intermediate biosynthesis; chorismate biosynthesis; chorismate from D-erythrose 4-phosphate and phosphoenolpyruvate: step 3/7. Functionally, catalyzes a trans-dehydration via an enolate intermediate. This chain is 3-dehydroquinate dehydratase, found in Shewanella oneidensis (strain ATCC 700550 / JCM 31522 / CIP 106686 / LMG 19005 / NCIMB 14063 / MR-1).